The chain runs to 358 residues: MSADAAAGAPLPRLCCLEKGPNGYGFHLHGEKGKLGQYIRLVEPGSPAEKAGLLAGDRLVEVNGENVEKETHQQVVSRIRAALNAVRLLVVDPETDEQLQKLGVQVREELLRAQETPGQAEPAAAAEAQGAGNENEPREADKSHPEQRKLRPRLCTMKKGPSGYGFNLHSDKSKPGQFIRSVDPDSPAEASGLRAQDRIVEVNGVCMEGKQHGDVVSAIRAGGDETKLLVVDRETDEFFKKCKVTPSQEHLNGPLPEPFTNGEIQKENSREALAEAASESPRPTLVRSASSDTSEELNSQDSPPKQDSTAPSSTSSSDPILDFNISLAMAKERAHQKRSSKRAPQMDWSKKNELFSNL.

Serine 2 carries the post-translational modification N-acetylserine. Phosphoserine occurs at positions 2 and 46. Residues 14–94 (LCCLEKGPNG…AVRLLVVDPE (81 aa)) enclose the PDZ 1 domain. Positions 114–134 (QETPGQAEPAAAAEAQGAGNE) are enriched in low complexity. 2 disordered regions span residues 114 to 192 (QETP…EASG) and 269 to 358 (SREA…FSNL). Over residues 135 to 149 (NEPREADKSHPEQRK) the composition is skewed to basic and acidic residues. The PDZ 2 domain maps to 154–234 (LCTMKKGPSG…ETKLLVVDRE (81 aa)). Serine 162, serine 269, serine 280, serine 290, and serine 291 each carry phosphoserine. The span at 287–306 (RSASSDTSEELNSQDSPPKQ) shows a compositional bias: polar residues. At threonine 293 the chain carries Phosphothreonine. 3 positions are modified to phosphoserine: serine 294, serine 299, and serine 302. Positions 307–319 (DSTAPSSTSSSDP) are enriched in low complexity. Residues 348–358 (WSKKNELFSNL) show a composition bias toward basic and acidic residues.

Homodimer, and heterodimer with NHERF2. Binds the N-termini of EZR, RDX and MSN. Binds the C-termini of PDGFRA, PDGFRB, ADRB2, NOS2 and CFTR. Binds ARHGAP17, EPI64, RACK1, OPRK1, GNAQ, CTNNB1 and PLCB3. Binds PDZK1. Interacts with CLCN3. Binds the C-terminus of PAG1. In resting T-cells, part of a PAG1-NHERF1-MSN complex which is disrupted upon TCR activation. Forms a complex with CFTR and SLC4A7. Forms a complex with SLC4A7 and ATP6V1B1. Interacts with TRPC4 (via the PDZ-binding domain). Directly interacts with HTR4. Interacts (via the PDZ 1 domain) with PODXL (via the C-terminal PDZ-binding motif DTHL); interaction is not detected in glomerular epithelium cells. Interacts (via the PDZ 1 domain) with PODXL (via the C-terminal PDZ-binding motif DTHL); the interaction take place early in the secretory pathway and is necessary for its apical membrane sorting. Interacts with SLC26A3. Interacts with MCC. Interacts with SLC34A1. Interacts (via the PDZ domains) with SLC26A6 isoform 4 and isoform 5. Interacts (via PDZ domains) with ACE2 (via PDZ-binding motif); the interaction may enhance ACE2 membrane residence. Post-translationally, phosphorylated on serine residues.

It is found in the cytoplasm. Its subcellular location is the apical cell membrane. It localises to the endomembrane system. The protein resides in the cell projection. The protein localises to the filopodium. It is found in the ruffle. Its subcellular location is the microvillus. Scaffold protein that connects plasma membrane proteins with members of the ezrin/moesin/radixin family and thereby helps to link them to the actin cytoskeleton and to regulate their surface expression. Necessary for recycling of internalized ADRB2. Was first known to play a role in the regulation of the activity and subcellular location of SLC9A3. Necessary for cAMP-mediated phosphorylation and inhibition of SLC9A3. Involved in sperm capacitation. May participate in the regulation of the chloride and bicarbonate homeostasis in spermatozoa. May enhance Wnt signaling. May participate in HTR4 targeting to microvilli. Involved in the regulation of phosphate reabsorption in the renal proximal tubules. This Macaca fascicularis (Crab-eating macaque) protein is Na(+)/H(+) exchange regulatory cofactor NHE-RF1 (NHERF1).